The chain runs to 115 residues: Large ribosomal subunit protein bL20 (115 aa).

The protein belongs to the bacterial ribosomal protein bL20 family.

In terms of biological role, binds directly to 23S ribosomal RNA and is necessary for the in vitro assembly process of the 50S ribosomal subunit. It is not involved in the protein synthesizing functions of that subunit. In Prochlorococcus marinus (strain MIT 9312), this protein is Large ribosomal subunit protein bL20.